We begin with the raw amino-acid sequence, 66 residues long: Sodium/potassium-transporting ATPase subunit gamma (66 aa).

Residues 29–46 traverse the membrane as a helical segment; sequence GGLIFAGLAFIVGLLILL.

Belongs to the FXYD family. As to quaternary structure, regulatory subunit of the sodium/potassium-transporting ATPase which is composed of a catalytic alpha subunit, an auxiliary non-catalytic beta subunit and an additional regulatory subunit. As to expression, expressed in the distal convoluted tubule in the kidney. Found on basolateral membranes of nephron epithelial cells.

The protein localises to the membrane. In terms of biological role, may be involved in forming the receptor site for cardiac glycoside binding or may modulate the transport function of the sodium ATPase. The chain is Sodium/potassium-transporting ATPase subunit gamma (FXYD2) from Homo sapiens (Human).